Reading from the N-terminus, the 709-residue chain is Eukaryotic translation initiation factor 3 subunit B (709 aa).

The segment at 1 to 98 is sufficient for interaction with HCR1 and TIF32; that stretch reads MSINEEEYLR…LFIQYKNVAD (98 aa). Residues 1–221 are sufficient for interaction with PIC8; the sequence is MSINEEEYLR…GIQAWGGADF (221 aa). In terms of domain architecture, RRM spans 37–124; the sequence is NYVIVDGAPI…HRLLVNRLSD (88 aa).

It belongs to the eIF-3 subunit B family. In terms of assembly, component of the eukaryotic translation initiation factor 3 (eIF-3) complex.

It is found in the cytoplasm. Functionally, RNA-binding component of the eukaryotic translation initiation factor 3 (eIF-3) complex, which is involved in protein synthesis of a specialized repertoire of mRNAs and, together with other initiation factors, stimulates binding of mRNA and methionyl-tRNAi to the 40S ribosome. The eIF-3 complex specifically targets and initiates translation of a subset of mRNAs involved in cell proliferation. The protein is Eukaryotic translation initiation factor 3 subunit B of Lodderomyces elongisporus (strain ATCC 11503 / CBS 2605 / JCM 1781 / NBRC 1676 / NRRL YB-4239) (Yeast).